The sequence spans 159 residues: Transcription antitermination protein NusB (159 aa).

The protein belongs to the NusB family.

In terms of biological role, involved in transcription antitermination. Required for transcription of ribosomal RNA (rRNA) genes. Binds specifically to the boxA antiterminator sequence of the ribosomal RNA (rrn) operons. The polypeptide is Transcription antitermination protein NusB (Xanthomonas campestris pv. campestris (strain 8004)).